The primary structure comprises 340 residues: Glycerol-3-phosphate dehydrogenase [NAD(P)+] (340 aa).

Trp11, Arg33, and Lys110 together coordinate NADPH. Residues Lys110, Gly144, and Ser146 each coordinate sn-glycerol 3-phosphate. Ala148 is a binding site for NADPH. 5 residues coordinate sn-glycerol 3-phosphate: Lys199, Asp252, Ser262, Arg263, and Asn264. Lys199 (proton acceptor) is an active-site residue. Arg263 is an NADPH binding site. Residues Val287 and Glu289 each contribute to the NADPH site.

It belongs to the NAD-dependent glycerol-3-phosphate dehydrogenase family.

The protein resides in the cytoplasm. It carries out the reaction sn-glycerol 3-phosphate + NAD(+) = dihydroxyacetone phosphate + NADH + H(+). It catalyses the reaction sn-glycerol 3-phosphate + NADP(+) = dihydroxyacetone phosphate + NADPH + H(+). Its pathway is membrane lipid metabolism; glycerophospholipid metabolism. Its function is as follows. Catalyzes the reduction of the glycolytic intermediate dihydroxyacetone phosphate (DHAP) to sn-glycerol 3-phosphate (G3P), the key precursor for phospholipid synthesis. In Polynucleobacter asymbioticus (strain DSM 18221 / CIP 109841 / QLW-P1DMWA-1) (Polynucleobacter necessarius subsp. asymbioticus), this protein is Glycerol-3-phosphate dehydrogenase [NAD(P)+].